A 496-amino-acid polypeptide reads, in one-letter code: L-arabinose isomerase (496 aa).

Glu-306, Glu-331, His-348, and His-447 together coordinate Mn(2+).

This sequence belongs to the arabinose isomerase family. Homotetramer. The cofactor is Mn(2+).

The catalysed reaction is beta-L-arabinopyranose = L-ribulose. It participates in carbohydrate degradation; L-arabinose degradation via L-ribulose; D-xylulose 5-phosphate from L-arabinose (bacterial route): step 1/3. Its activity is regulated as follows. Inhibited by copper. In terms of biological role, catalyzes the conversion of L-arabinose to L-ribulose. In vitro, converts D-galactose into D-tagatose. This chain is L-arabinose isomerase (araA), found in Geobacillus stearothermophilus (Bacillus stearothermophilus).